A 391-amino-acid polypeptide reads, in one-letter code: NAD(P)H-quinone oxidoreductase subunit H, chloroplastic (391 aa).

Belongs to the complex I 49 kDa subunit family. In terms of assembly, NDH is composed of at least 16 different subunits, 5 of which are encoded in the nucleus.

Its subcellular location is the plastid. The protein resides in the chloroplast thylakoid membrane. It carries out the reaction a plastoquinone + NADH + (n+1) H(+)(in) = a plastoquinol + NAD(+) + n H(+)(out). It catalyses the reaction a plastoquinone + NADPH + (n+1) H(+)(in) = a plastoquinol + NADP(+) + n H(+)(out). Its function is as follows. NDH shuttles electrons from NAD(P)H:plastoquinone, via FMN and iron-sulfur (Fe-S) centers, to quinones in the photosynthetic chain and possibly in a chloroplast respiratory chain. The immediate electron acceptor for the enzyme in this species is believed to be plastoquinone. Couples the redox reaction to proton translocation, and thus conserves the redox energy in a proton gradient. The sequence is that of NAD(P)H-quinone oxidoreductase subunit H, chloroplastic from Nephroselmis olivacea (Green alga).